We begin with the raw amino-acid sequence, 213 residues long: Histone H1.2 (213 aa).

Over residues M1 to K17 the composition is skewed to low complexity. Residues M1–S41 are disordered. The residue at position 2 (S2) is an N-acetylserine; partial. S2 is modified (phosphoserine). K17 is modified (N6-acetyllysine). Basic residues predominate over residues V20–A35. Residues K23, K26, and K27 each carry the N6-(2-hydroxyisobutyryl)lysine modification. An N6-(beta-hydroxybutyryl)lysine; alternate modification is found at K34. K34 carries the post-translational modification N6-crotonyllysine; alternate. N6-methyllysine; alternate is present on K34. An H15 domain is found at S36–K109. K46 carries the post-translational modification N6-(2-hydroxyisobutyryl)lysine. At K52 the chain carries N6-(beta-hydroxybutyryl)lysine; alternate. At K52 the chain carries N6-(2-hydroxyisobutyryl)lysine; alternate. A Citrulline modification is found at R54. K63 bears the N6-(2-hydroxyisobutyryl)lysine mark. K64 bears the N6-(beta-hydroxybutyryl)lysine; alternate mark. An N6-crotonyllysine; alternate modification is found at K64. At K64 the chain carries N6-(2-hydroxyisobutyryl)lysine; alternate. N6-(2-hydroxyisobutyryl)lysine is present on residues K75 and K81. An N6-(beta-hydroxybutyryl)lysine; alternate mark is found at K85 and K90. 3 positions are modified to N6-crotonyllysine; alternate: K85, K90, and K97. N6-(2-hydroxyisobutyryl)lysine; alternate occurs at positions 85, 90, and 97. Residues Q95–K213 form a disordered region. K97 carries the post-translational modification N6-succinyllysine; alternate. At S104 the chain carries Phosphoserine; by PKC. N6-(beta-hydroxybutyryl)lysine is present on K106. Residues K110, K117, K121, K129, and K136 each carry the N6-(2-hydroxyisobutyryl)lysine modification. Over residues K119–K140 the composition is skewed to basic residues. A Phosphothreonine modification is found at T146. Residue K148 is modified to N6-(2-hydroxyisobutyryl)lysine. Over residues K149–K160 the composition is skewed to basic residues. N6-crotonyllysine; alternate occurs at positions 159 and 168. Residues K159 and K168 each carry the N6-(2-hydroxyisobutyryl)lysine; alternate modification. The segment covering K169–A186 has biased composition (basic residues). K187 is subject to N6-methyllysine; by EHMT1 and EHMT2. Residue S188 is modified to ADP-ribosylserine. A compositionally biased stretch (basic residues) spans V193–K213.

Belongs to the histone H1/H5 family. Post-translationally, H1 histones are progressively phosphorylated during the cell cycle, becoming maximally phosphorylated during late G2 phase and M phase, and being dephosphorylated sharply thereafter. In terms of processing, crotonylation (Kcr) is specifically present in male germ cells and marks testis-specific genes in post-meiotic cells, including X-linked genes that escape sex chromosome inactivation in haploid cells. Crotonylation marks active promoters and enhancers and confers resistance to transcriptional repressors. It is also associated with post-meiotically activated genes on autosomes. ADP-ribosylated on Ser-188 in response to DNA damage. Post-translationally, citrullination at Arg-54 (H1R54ci) by PADI4 takes place within the DNA-binding site of H1 and results in its displacement from chromatin and global chromatin decondensation, thereby promoting pluripotency and stem cell maintenance.

The protein localises to the nucleus. It is found in the chromosome. Histone H1 protein binds to linker DNA between nucleosomes forming the macromolecular structure known as the chromatin fiber. Histones H1 are necessary for the condensation of nucleosome chains into higher-order structured fibers. Also acts as a regulator of individual gene transcription through chromatin remodeling, nucleosome spacing and DNA methylation. This Bos taurus (Bovine) protein is Histone H1.2.